Consider the following 881-residue polypeptide: Formin-like protein 10 (881 aa).

The signal sequence occupies residues 1 to 24 (MAMKRVVFLLLLVAASALVKSSRG). The disordered stretch occupies residues 194-223 (LTPSNSLNMEPPSPYYPSKSAHKHQGVAPP). A helical membrane pass occupies residues 236–256 (VVLIAVLPTAALSFLAAFLCF). A compositionally biased stretch (polar residues) spans 333 to 346 (TLVTGGTQENNATS). Disordered stretches follow at residues 333–427 (TLVT…EVNA), 683–703 (ENGR…ESLQ), and 837–881 (ASQK…DSND). The segment covering 351–390 (LMPPPPPPPPPPPPPPPPPPPRPPPPPPPIKKGAPPPAPP) has biased composition (pro residues). Low complexity predominate over residues 400–424 (LSPTESSRSEESSASELASESSETE). The FH2 domain maps to 422–854 (ETEVNAPRAK…KSQANGNSNN (433 aa)). Positions 692–701 (STSDDNSNES) are enriched in polar residues. Positions 846–865 (SQANGNSNNPSSQSNPQEQQ) are enriched in low complexity. Residues 870-881 (LDHHFDSSDSND) show a composition bias toward basic and acidic residues.

The protein belongs to the formin-like family. Class-I subfamily.

It localises to the membrane. The sequence is that of Formin-like protein 10 (FH10) from Oryza sativa subsp. japonica (Rice).